The chain runs to 308 residues: S-crystallin SL18 (308 aa).

A GST N-terminal domain is found at 2–80 (PKYTLYYFNS…YLARQFGFYG (79 aa)). A disordered region spans residues 165–205 (EMRSQDSMVEPPSQKLSPELESQSSLCSERPQCGPPDPMMG). Polar residues predominate over residues 178–191 (QKLSPELESQSSLC). In terms of domain architecture, GST C-terminal spans 185 to 308 (ESQSSLCSER…YFTLRNYTDF (124 aa)).

This sequence belongs to the GST superfamily. In terms of tissue distribution, lens.

In terms of biological role, S-crystallins are structural components of squids and octopi eye lens. Contains relatively little if any GST activity. This Nototodarus sloanii (Wellington flying squid) protein is S-crystallin SL18.